The chain runs to 1788 residues: Laminin subunit beta-1 (1788 aa).

The first 24 residues, 1 to 24 (MLELRLIVVIVLALLSWQWDPVDS), serve as a signal peptide directing secretion. The interval 23 to 43 (DSQRPPQHGRRDRPKYPPNKF) is disordered. One can recognise a Laminin N-terminal domain in the interval 50-287 (ERSSCYPATG…GISNMVVRGS (238 aa)). N-linked (GlcNAc...) asparagine glycans are attached at residues asparagine 138, asparagine 201, and asparagine 232. Disulfide bonds link cysteine 288–cysteine 297, cysteine 290–cysteine 318, cysteine 320–cysteine 329, cysteine 332–cysteine 352, cysteine 355–cysteine 364, cysteine 357–cysteine 382, cysteine 385–cysteine 394, cysteine 397–cysteine 415, cysteine 418–cysteine 431, cysteine 420–cysteine 446, cysteine 448–cysteine 457, cysteine 460–cysteine 475, cysteine 478–cysteine 491, cysteine 480–cysteine 498, cysteine 500–cysteine 509, cysteine 512–cysteine 526, cysteine 529–cysteine 541, cysteine 531–cysteine 548, and cysteine 550–cysteine 559. Laminin EGF-like domains are found at residues 288–354 (CSCY…ACKK), 355–417 (CECN…VCQP), 418–477 (CDCD…GCEP), and 478–528 (CTCN…GCSL). Asparagine 487 carries N-linked (GlcNAc...) asparagine glycosylation. Residues 529 to 559 (CNCDAGGSYDNYCDVISGQCRCRPHMTGRSC) enclose the Laminin EGF-like 5; truncated domain. The 217-residue stretch at 567–783 (FIPLLPEVHE…LDNILSVFVH (217 aa)) folds into the Laminin IV type B domain. Asparagine 591 carries N-linked (GlcNAc...) asparagine glycosylation. The short motif at 641–643 (RGD) is the Cell attachment site element. Cystine bridges form between cysteine 789–cysteine 801, cysteine 791–cysteine 808, cysteine 810–cysteine 819, cysteine 822–cysteine 834, cysteine 837–cysteine 849, cysteine 839–cysteine 856, cysteine 858–cysteine 867, cysteine 870–cysteine 880, cysteine 883–cysteine 892, cysteine 885–cysteine 899, cysteine 902–cysteine 911, cysteine 914–cysteine 930, cysteine 933–cysteine 949, cysteine 935–cysteine 960, cysteine 962–cysteine 971, cysteine 974–cysteine 988, cysteine 991–cysteine 1005, cysteine 993–cysteine 1012, cysteine 1015–cysteine 1024, cysteine 1027–cysteine 1040, cysteine 1043–cysteine 1057, cysteine 1045–cysteine 1064, cysteine 1066–cysteine 1075, cysteine 1078–cysteine 1091, cysteine 1094–cysteine 1106, cysteine 1096–cysteine 1113, cysteine 1115–cysteine 1124, cysteine 1127–cysteine 1139, cysteine 1142–cysteine 1154, cysteine 1144–cysteine 1161, cysteine 1163–cysteine 1172, and cysteine 1175–cysteine 1186. Laminin EGF-like domains are found at residues 789-836 (CNCN…GCKA), 837-882 (CDCN…ECRV), 883-932 (CQCN…GCRP), 933-990 (CRCP…TCSK), 991-1042 (CECS…NCQQ), 1043-1093 (CECD…GCES), 1094-1141 (CNCD…KCQP), and 1142-1188 (CECD…HCSP). Asparagine 1051 is a glycosylation site (N-linked (GlcNAc...) asparagine). The segment at 1189–1405 (CGECFNNWDL…SQIPELNNQV (217 aa)) is domain II. Asparagine 1246, asparagine 1301, asparagine 1330, and asparagine 1341 each carry an N-linked (GlcNAc...) asparagine glycan. Positions 1255 to 1405 (EKLDYETQSL…SQIPELNNQV (151 aa)) form a coiled coil. Residues 1406-1432 (CGKPGDPCDSLCGGAGCGHCGGFLSCE) are domain alpha. A domain I region spans residues 1433–1788 (HGAKTHSEEA…RGSHYRQCYT (356 aa)). A coiled-coil region spans residues 1453 to 1505 (ITSKKDQADQTIRALTQAKLNASEAYEKAKRGFEQSERYLNQTNANIKLAENL). 3 N-linked (GlcNAc...) asparagine glycosylation sites follow: asparagine 1473, asparagine 1493, and asparagine 1515. The stretch at 1540-1561 (EEIETLGDQINRAVSSLKNVEA) forms a coiled coil. 3 N-linked (GlcNAc...) asparagine glycosylation sites follow: asparagine 1581, asparagine 1644, and asparagine 1703. A coiled-coil region spans residues 1608–1762 (QGKAKDAIQQ…QQLLRLQAEI (155 aa)). Positions 1690–1719 (GEANNLQSATSATNQTLTDRASRSENARER) are disordered. Residues 1693-1708 (NNLQSATSATNQTLTD) show a composition bias toward polar residues. Basic and acidic residues predominate over residues 1709–1719 (RASRSENARER).

In terms of assembly, laminin is a complex glycoprotein, consisting of three different polypeptide chains (alpha, beta, gamma), which are bound to each other by disulfide bonds into a cross-shaped molecule comprising one long and three short arms with globules at each end. As to expression, found in the basement membranes (major component).

The protein localises to the secreted. Its subcellular location is the extracellular space. The protein resides in the extracellular matrix. It localises to the basement membrane. Binding to cells via a high affinity receptor, laminin is thought to mediate the attachment, migration and organization of cells into tissues during embryonic development by interacting with other extracellular matrix components. Required for Ndg localization to the basement membrane. The polypeptide is Laminin subunit beta-1 (LanB1) (Drosophila melanogaster (Fruit fly)).